A 429-amino-acid chain; its full sequence is Arsenical pump membrane protein (429 aa).

Residues 1–20 (MLLAGAIFVLTIVLVIWQPK) lie on the Cytoplasmic side of the membrane. Residues 21-41 (GLGIGWSATLGAVLALVTGVV) traverse the membrane as a helical segment. Topologically, residues 42–45 (HPGD) are periplasmic. The chain crosses the membrane as a helical span at residues 46 to 66 (IPVVWNIVWNATAAFIAVIII). Residues 67–97 (SLLLDESGFFEWAALHVSRWGNGRGRLLFTW) lie on the Cytoplasmic side of the membrane. A helical transmembrane segment spans residues 98 to 118 (IVLLGAAVAALFANDGAALIL). Residues 119-120 (TP) lie on the Periplasmic side of the membrane. A helical membrane pass occupies residues 121–141 (IVIAMLLALGFSKGTTLAFVM). The Cytoplasmic portion of the chain corresponds to 142 to 151 (AAGFIADTAS). A helical transmembrane segment spans residues 152–172 (LPLIVSNLVNIVSADFFGLGF). Topologically, residues 173-177 (REYAS) are periplasmic. The chain crosses the membrane as a helical span at residues 178 to 198 (VMVPVDIAAIVATLVMLHLYF). Residues 199–227 (RKDIPQNYDMALLKSPAEAIKDPATFKTG) lie on the Cytoplasmic side of the membrane. 2 helical membrane-spanning segments follow: residues 228-248 (WVVL…GIPV) and 249-269 (SAIA…GHAI). The Cytoplasmic portion of the chain corresponds to 270–273 (NTGK). Residues 274–294 (VLRGAPWQIVIFSLGMYLVVY) form a helical membrane-spanning segment. Residues 295–310 (GLRNAGLTEYLSGVLN) are Periplasmic-facing. A helical transmembrane segment spans residues 311–331 (VLADNGLWAATLGTGFLTAFL). The Cytoplasmic portion of the chain corresponds to 332–406 (SSIMNNMPTV…ISWGYYFRTG (75 aa)). The chain crosses the membrane as a helical span at residues 407–427 (IIMTLPVLFVTLAALALRLSF). Residues 428-429 (TL) are Periplasmic-facing.

This sequence belongs to the ArsB family.

The protein resides in the cell inner membrane. Functionally, involved in arsenical resistance. Thought to form the channel of an arsenite pump. This chain is Arsenical pump membrane protein (arsB), found in Shigella flexneri.